We begin with the raw amino-acid sequence, 143 residues long: Large ribosomal subunit protein uL13c (143 aa).

The protein belongs to the universal ribosomal protein uL13 family. Part of the 50S ribosomal subunit.

The protein localises to the plastid. Its subcellular location is the chloroplast. The sequence is that of Large ribosomal subunit protein uL13c from Gracilaria tenuistipitata var. liui (Red alga).